We begin with the raw amino-acid sequence, 69 residues long: Mu-conotoxin-like Am3.1 (69 aa).

Positions M1–A20 are cleaved as a signal peptide. A propeptide spanning residues V21–R52 is cleaved from the precursor. Residues P22–E43 are disordered. The segment covering P28–E43 has biased composition (basic and acidic residues). P66 carries the post-translational modification 4-hydroxyproline; partial; in minor form. At C68 the chain carries Cysteine amide.

Belongs to the conotoxin M family. Mostly non-hydroxylated. In terms of processing, contains 3 disulfide bonds. Expressed by the venom duct.

The protein localises to the secreted. Mu-conotoxins block voltage-gated sodium channels (Nav). This chain is Mu-conotoxin-like Am3.1, found in Conus amadis (Amadis cone).